Consider the following 300-residue polypeptide: Ribosomal protein L11 methyltransferase (300 aa).

Residues T152, G173, D195, and N234 each contribute to the S-adenosyl-L-methionine site.

Belongs to the methyltransferase superfamily. PrmA family.

Its subcellular location is the cytoplasm. The catalysed reaction is L-lysyl-[protein] + 3 S-adenosyl-L-methionine = N(6),N(6),N(6)-trimethyl-L-lysyl-[protein] + 3 S-adenosyl-L-homocysteine + 3 H(+). Functionally, methylates ribosomal protein L11. This chain is Ribosomal protein L11 methyltransferase, found in Paraburkholderia phymatum (strain DSM 17167 / CIP 108236 / LMG 21445 / STM815) (Burkholderia phymatum).